An 84-amino-acid polypeptide reads, in one-letter code: Turripeptide IX-01 (84 aa).

The first 21 residues, 1-21 (MGFYMLLTVALLLTSFMSVEA), serve as a signal peptide directing secretion. The propeptide occupies 22 to 39 (TPVDQAERSAMKESGLAH). 3 disulfides stabilise this stretch: Cys-48-Cys-70, Cys-55-Cys-74, and Cys-60-Cys-81.

As to expression, expressed by the venom duct.

Its subcellular location is the secreted. This Gemmula speciosa (Splendid gem-turris) protein is Turripeptide IX-01.